A 445-amino-acid polypeptide reads, in one-letter code: ATP synthase subunit b-delta (445 aa).

The tract at residues Met1–Ala168 is ATP synthase subunit b. A helical transmembrane segment spans residues Ile3–Val23. The interval Thr169 to Asp445 is ATP synthase subunit delta.

This sequence in the N-terminal section; belongs to the ATPase B chain family. The protein in the C-terminal section; belongs to the ATPase delta chain family. In terms of assembly, F-type ATPases have 2 components, F(1) - the catalytic core - and F(0) - the membrane proton channel. F(1) has five subunits: alpha(3), beta(3), gamma(1), delta(1), epsilon(1). F(0) has three main subunits: a(1), b(2) and c(10-14). The alpha and beta chains form an alternating ring which encloses part of the gamma chain. F(1) is attached to F(0) by a central stalk formed by the gamma and epsilon chains, while a peripheral stalk is formed by the delta and b chains.

It is found in the cell membrane. F(1)F(0) ATP synthase produces ATP from ADP in the presence of a proton or sodium gradient. F-type ATPases consist of two structural domains, F(1) containing the extramembraneous catalytic core and F(0) containing the membrane proton channel, linked together by a central stalk and a peripheral stalk. During catalysis, ATP synthesis in the catalytic domain of F(1) is coupled via a rotary mechanism of the central stalk subunits to proton translocation. Its function is as follows. This fusion protein includes a component of the F(0) channel (subunit b) and of the F(1) subunit (subunit delta). Two copies of subunit b and one of delta together form the peripheral 'stator' stalk which links F(1) to F(0). The protein is ATP synthase subunit b-delta (atpFH) of Mycolicibacterium smegmatis (strain ATCC 700084 / mc(2)155) (Mycobacterium smegmatis).